Reading from the N-terminus, the 1182-residue chain is Rho GTPase-activating protein 20 (1182 aa).

Positions 1 to 40 (MEAMSPQQDALGAQPGRSSSLTGMSRIAGGPGTKKKMKTL) are disordered. Ser-46 carries the phosphoserine modification. One can recognise a PH domain in the interval 85 to 185 (TLLIDGPVEL…WLSLLQRYIA (101 aa)). The region spanning 194–283 (KSIPLKIFAK…TALLTQGSRD (90 aa)) is the Ras-associating domain. The Rho-GAP domain maps to 365 to 551 (VSLPDLCEND…FLIENCCRVF (187 aa)). Ser-704 and Ser-730 each carry phosphoserine. 6 disordered regions span residues 745-772 (QTQP…KRNT), 803-839 (VASY…QKSS), 935-955 (SYSS…SSQD), 982-1011 (TQRK…GQAS), 1074-1101 (LPSC…EGPG), and 1142-1182 (SGGQ…GTDI). Residues 758–772 (KQSSVTGTDVSKRNT) show a composition bias toward polar residues. Positions 811-824 (SQDHPRKQAFDADP) are enriched in basic and acidic residues.

Functionally, GTPase activator for the Rho-type GTPases by converting them to an inactive GDP-bound state. This Mus musculus (Mouse) protein is Rho GTPase-activating protein 20 (Arhgap20).